Here is a 530-residue protein sequence, read N- to C-terminus: Meiosis 1 arrest protein (530 aa).

A disordered region spans residues 463-530; it reads LHPHWESRAP…SEWEKDPSRP (68 aa). Residues 503–516 are compositionally biased toward low complexity; it reads ASKMPAASKSSSDA.

It localises to the cytoplasm. Functionally, required for meiosis I progression during spermatogenesis. The chain is Meiosis 1 arrest protein (M1AP) from Homo sapiens (Human).